The sequence spans 172 residues: MSKENEVLLNEDIRAREVRCVGDDGTAYGVISRDEALEISNKLGLDLVLIAPDAKPPVCKIMDYGKFRYQQEKKQKEAKKKQKTIEIKEIKLSVKIAQNDINYKVKHASEFLQDGKHVKFRVFLKGREMSTPEAGVAMLEKVWEMIKDEADRDKEPIIEGRYVNMLVTPKKG.

It belongs to the IF-3 family. As to quaternary structure, monomer.

It is found in the cytoplasm. In terms of biological role, IF-3 binds to the 30S ribosomal subunit and shifts the equilibrium between 70S ribosomes and their 50S and 30S subunits in favor of the free subunits, thus enhancing the availability of 30S subunits on which protein synthesis initiation begins. This Campylobacter concisus (strain 13826) protein is Translation initiation factor IF-3.